A 427-amino-acid polypeptide reads, in one-letter code: Trigger factor (427 aa).

One can recognise a PPIase FKBP-type domain in the interval 163–248 (GDTVVIDFVG…IHEVKEKEVP (86 aa)).

It belongs to the FKBP-type PPIase family. Tig subfamily.

The protein localises to the cytoplasm. The catalysed reaction is [protein]-peptidylproline (omega=180) = [protein]-peptidylproline (omega=0). Its function is as follows. Involved in protein export. Acts as a chaperone by maintaining the newly synthesized protein in an open conformation. Functions as a peptidyl-prolyl cis-trans isomerase. This is Trigger factor from Streptococcus sanguinis (strain SK36).